We begin with the raw amino-acid sequence, 354 residues long: Uroporphyrinogen decarboxylase (354 aa).

Substrate-binding positions include 27–31, Asp-77, Tyr-154, Thr-209, and His-327; that span reads RQAGR.

This sequence belongs to the uroporphyrinogen decarboxylase family. Homodimer.

The protein resides in the cytoplasm. The enzyme catalyses uroporphyrinogen III + 4 H(+) = coproporphyrinogen III + 4 CO2. It functions in the pathway porphyrin-containing compound metabolism; protoporphyrin-IX biosynthesis; coproporphyrinogen-III from 5-aminolevulinate: step 4/4. Functionally, catalyzes the decarboxylation of four acetate groups of uroporphyrinogen-III to yield coproporphyrinogen-III. The chain is Uroporphyrinogen decarboxylase from Escherichia fergusonii (strain ATCC 35469 / DSM 13698 / CCUG 18766 / IAM 14443 / JCM 21226 / LMG 7866 / NBRC 102419 / NCTC 12128 / CDC 0568-73).